A 187-amino-acid chain; its full sequence is UPF0301 protein HS_0009 (187 aa).

It belongs to the UPF0301 (AlgH) family.

This chain is UPF0301 protein HS_0009, found in Histophilus somni (strain 129Pt) (Haemophilus somnus).